Reading from the N-terminus, the 313-residue chain is Putative S-adenosyl-L-methionine-dependent methyltransferase MAP_4064c (313 aa).

S-adenosyl-L-methionine-binding positions include Asp129 and Asp158–Leu159.

It belongs to the UPF0677 family.

In terms of biological role, exhibits S-adenosyl-L-methionine-dependent methyltransferase activity. The chain is Putative S-adenosyl-L-methionine-dependent methyltransferase MAP_4064c from Mycolicibacterium paratuberculosis (strain ATCC BAA-968 / K-10) (Mycobacterium paratuberculosis).